Reading from the N-terminus, the 876-residue chain is DNA polymerase 1 (876 aa).

It belongs to the DNA polymerase type-B family.

The enzyme catalyses DNA(n) + a 2'-deoxyribonucleoside 5'-triphosphate = DNA(n+1) + diphosphate. Functionally, this polymerase possesses two enzymatic activities: DNA synthesis (polymerase) and an exonucleolytic activity that degrades single-stranded DNA in the 3'- to 5'-direction. This Sulfolobus acidocaldarius (strain ATCC 33909 / DSM 639 / JCM 8929 / NBRC 15157 / NCIMB 11770) protein is DNA polymerase 1 (dpo1).